Consider the following 379-residue polypeptide: Tryptophan 2,3-dioxygenase (379 aa).

Residues 57–61 (FIITH) and Arg-128 contribute to the substrate site. His-312 contributes to the heme binding site. Thr-327 is a substrate binding site.

The protein belongs to the tryptophan 2,3-dioxygenase family. In terms of assembly, homotetramer. Dimer of dimers. The cofactor is heme.

The enzyme catalyses L-tryptophan + O2 = N-formyl-L-kynurenine. The protein operates within amino-acid degradation; L-tryptophan degradation via kynurenine pathway; L-kynurenine from L-tryptophan: step 1/2. It functions in the pathway pigment biosynthesis; ommochrome biosynthesis. Its function is as follows. Heme-dependent dioxygenase that catalyzes the oxidative cleavage of the L-tryptophan (L-Trp) pyrrole ring and converts L-tryptophan to N-formyl-L-kynurenine. Catalyzes the oxidative cleavage of the indole moiety. This is Tryptophan 2,3-dioxygenase from Drosophila yakuba (Fruit fly).